Here is a 396-residue protein sequence, read N- to C-terminus: 1-deoxy-D-xylulose 5-phosphate reductoisomerase (396 aa).

NADPH is bound by residues threonine 10, glycine 11, serine 12, isoleucine 13, glycine 36, lysine 37, asparagine 38, and asparagine 124. 1-deoxy-D-xylulose 5-phosphate is bound at residue lysine 125. Glutamate 126 is a binding site for NADPH. A Mn(2+)-binding site is contributed by aspartate 150. Serine 151, glutamate 152, serine 186, and histidine 209 together coordinate 1-deoxy-D-xylulose 5-phosphate. Position 152 (glutamate 152) interacts with Mn(2+). Position 215 (glycine 215) interacts with NADPH. Serine 222, asparagine 227, lysine 228, and glutamate 231 together coordinate 1-deoxy-D-xylulose 5-phosphate. A Mn(2+)-binding site is contributed by glutamate 231.

This sequence belongs to the DXR family. Mg(2+) is required as a cofactor. It depends on Mn(2+) as a cofactor.

The catalysed reaction is 2-C-methyl-D-erythritol 4-phosphate + NADP(+) = 1-deoxy-D-xylulose 5-phosphate + NADPH + H(+). The protein operates within isoprenoid biosynthesis; isopentenyl diphosphate biosynthesis via DXP pathway; isopentenyl diphosphate from 1-deoxy-D-xylulose 5-phosphate: step 1/6. Catalyzes the NADPH-dependent rearrangement and reduction of 1-deoxy-D-xylulose-5-phosphate (DXP) to 2-C-methyl-D-erythritol 4-phosphate (MEP). The sequence is that of 1-deoxy-D-xylulose 5-phosphate reductoisomerase from Actinobacillus pleuropneumoniae serotype 5b (strain L20).